An 80-amino-acid polypeptide reads, in one-letter code: uncharacterized protein (80 aa).

Positions 57–80 are disordered; it reads GNIDSDVSDQDQIGNPSAPISNQI.

This is an uncharacterized protein from Bacillus subtilis (strain 168).